Reading from the N-terminus, the 211-residue chain is Redox-sensing transcriptional repressor Rex (211 aa).

A DNA-binding region (H-T-H motif) is located at residues 17–56 (LYYRFIQNFAQEGMERISSKELSEAMKIDSATIRRDFSYF). NAD(+) is bound at residue 91 to 96 (GVGNLG).

Belongs to the transcriptional regulatory Rex family. In terms of assembly, homodimer.

It localises to the cytoplasm. In terms of biological role, modulates transcription in response to changes in cellular NADH/NAD(+) redox state. This chain is Redox-sensing transcriptional repressor Rex, found in Lysinibacillus sphaericus (strain C3-41).